The primary structure comprises 252 residues: uncharacterized protein (252 aa).

The protein resides in the plastid. The protein localises to the chloroplast. This is an uncharacterized protein from Guillardia theta (Cryptophyte).